Consider the following 424-residue polypeptide: Virion nicking-joining enzyme (424 aa).

Belongs to the orthopoxvirus OPG042 family.

It localises to the virion. In terms of biological role, DNA nicking enzyme that cleaves extruded cruciform DNA at its tip. Probably nicks viral hairpins. This Cynomys gunnisoni (Gunnison's prairie dog) protein is Virion nicking-joining enzyme (OPG042).